Consider the following 151-residue polypeptide: UPF0208 membrane protein YPDSF_1972 (151 aa).

Helical transmembrane passes span 46–66 (FGIR…IALG) and 69–89 (LGPA…GLWW).

This sequence belongs to the UPF0208 family.

The protein resides in the cell inner membrane. In Yersinia pestis (strain Pestoides F), this protein is UPF0208 membrane protein YPDSF_1972.